A 131-amino-acid chain; its full sequence is Small ribosomal subunit protein uS8 (131 aa).

Belongs to the universal ribosomal protein uS8 family. Part of the 30S ribosomal subunit. Contacts proteins S5 and S12.

Its function is as follows. One of the primary rRNA binding proteins, it binds directly to 16S rRNA central domain where it helps coordinate assembly of the platform of the 30S subunit. In Helicobacter acinonychis (strain Sheeba), this protein is Small ribosomal subunit protein uS8.